Reading from the N-terminus, the 393-residue chain is S-adenosylmethionine synthase (393 aa).

Histidine 16 lines the ATP pocket. Aspartate 18 provides a ligand contact to Mg(2+). Residue glutamate 44 participates in K(+) binding. 2 residues coordinate L-methionine: glutamate 57 and glutamine 100. The tract at residues 100 to 110 (QSNDIAQGVDH) is flexible loop. ATP-binding positions include 167–169 (DAK), 238–239 (RF), aspartate 247, 253–254 (RK), alanine 270, and lysine 274. Residue aspartate 247 coordinates L-methionine. Residue lysine 278 coordinates L-methionine.

This sequence belongs to the AdoMet synthase family. Homotetramer; dimer of dimers. Mg(2+) is required as a cofactor. Requires K(+) as cofactor.

It is found in the cytoplasm. It catalyses the reaction L-methionine + ATP + H2O = S-adenosyl-L-methionine + phosphate + diphosphate. The protein operates within amino-acid biosynthesis; S-adenosyl-L-methionine biosynthesis; S-adenosyl-L-methionine from L-methionine: step 1/1. Catalyzes the formation of S-adenosylmethionine (AdoMet) from methionine and ATP. The overall synthetic reaction is composed of two sequential steps, AdoMet formation and the subsequent tripolyphosphate hydrolysis which occurs prior to release of AdoMet from the enzyme. This Paracidovorax citrulli (strain AAC00-1) (Acidovorax citrulli) protein is S-adenosylmethionine synthase.